A 465-amino-acid polypeptide reads, in one-letter code: Catalase cnsD (465 aa).

His39 is an active-site residue. Tyr331 is a binding site for heme.

Belongs to the catalase family. Requires heme as cofactor.

Its pathway is alkaloid biosynthesis. Functionally, catalase; part of the gene cluster that mediates the biosynthesis of communesins, a prominent class of indole alkaloids with great potential as pharmaceuticals. Communesins are biosynthesized by the coupling of tryptamine and aurantioclavine, two building blocks derived from L-tryptophan. The L-tryptophan decarboxylase cnsB converts L-tryptophan to tryptamine, whereas the tryptophan dimethylallyltransferase cnsF converts L-tryptophan to 4-dimethylallyl tryptophan which is further transformed to aurantioclavine by the aurantioclavine synthase cnsA, probably aided by the catalase cnsD. The cytochrome P450 monooxygenase cnsC catalyzes the heterodimeric coupling between the two different indole moieties, tryptamine and aurantioclavine, to construct vicinal quaternary stereocenters and yield the heptacyclic communesin scaffold. The O-methyltransferase cnsE then methylates the communesin scaffold to produce communesin K, the simplest characterized communesin that contains the heptacyclic core. The dioxygenase cnsJ converts communesin K into communesin I. Acylation to introduce the hexadienyl group at position N16 of communesin I by the acyltransferase cnsK leads to the production of communesin B. The hexadienyl group is produced by the highly reducing polyketide synthase cnsI, before being hydrolytically removed from cnsI by the serine hydrolase cnsH, converted into hexadienyl-CoA by the CoA ligase cnsG, and then transferred to communesin I by cnsK. Surprisingly, cnsK may also be a promiscuous acyltransferase that can tolerate a range of acyl groups, including acetyl-, propionyl-, and butyryl-CoA, which lead to communesins A, G and H respectively. The roles of the alpha-ketoglutarate-dependent dioxygenases cnsM and cnsP have still to be determined. This is Catalase cnsD from Penicillium expansum (Blue mold rot fungus).